We begin with the raw amino-acid sequence, 541 residues long: Serine/threonine-protein kinase akt-1 (541 aa).

The PH domain occupies 15 to 118 (DVVIEGWLHK…WIHAIESISK (104 aa)). The Protein kinase domain occupies 193 to 450 (FDFLKVLGKG…ALEICRADFF (258 aa)). Residues 199–207 (LGKGTFGKV) and Lys222 each bind ATP. The active-site Proton acceptor is Asp316. Phosphothreonine is present on Thr350. Residues 451-528 (RTVDWEATYR…HNVMGSINRI (78 aa)) enclose the AGC-kinase C-terminal domain. At Ser517 the chain carries Phosphoserine.

This sequence belongs to the protein kinase superfamily. AGC Ser/Thr protein kinase family. RAC subfamily. Interacts with pdk-1, sgk-1, akt-2 and daf-16. Part of a complex containing sgk-1, akt-1 and akt-2. Interacts with cmd-1 in the presence of Ca(2+). Interacts with let-92 phosphatase regulatory subunit pptr-1. Mg(2+) serves as cofactor. In terms of tissue distribution, expressed in neurons, muscle cells of the pharynx, rectal gland cells, vulva and spermatheca.

It catalyses the reaction L-seryl-[protein] + ATP = O-phospho-L-seryl-[protein] + ADP + H(+). It carries out the reaction L-threonyl-[protein] + ATP = O-phospho-L-threonyl-[protein] + ADP + H(+). With respect to regulation, phosphorylated and activated by pdk-1. In terms of biological role, acts downstream of PI3 kinase age-1 and kinase pdk-1 in the daf-2/insulin receptor-like transduction pathway. Phosphorylates Forkhead-related daf-16 and the longevity-promoting skn-1 transcription factors, which inhibits their entry into the nucleus and antagonizes their functions. Plays a role in maintaining the gonadal basement membrane through it's role in inhibiting daf-16 activity. Has an essential role in regulating developmental arrest at the dauer stage. Plays a role in immune function and pathogen resistance. Regulates salt chemotaxis learning. Downstream of age-1 and together with akt-2 and sgk-1, promotes cell survival during embryonic development. This is Serine/threonine-protein kinase akt-1 from Caenorhabditis elegans.